Reading from the N-terminus, the 259-residue chain is Phosphatidylserine decarboxylase proenzyme (259 aa).

S183 (schiff-base intermediate with substrate; via pyruvic acid) is an active-site residue. The residue at position 183 (S183) is a Pyruvic acid (Ser); by autocatalysis.

This sequence belongs to the phosphatidylserine decarboxylase family. PSD-A subfamily. Heterodimer of a large membrane-associated beta subunit and a small pyruvoyl-containing alpha subunit. It depends on pyruvate as a cofactor. Post-translationally, is synthesized initially as an inactive proenzyme. Formation of the active enzyme involves a self-maturation process in which the active site pyruvoyl group is generated from an internal serine residue via an autocatalytic post-translational modification. Two non-identical subunits are generated from the proenzyme in this reaction, and the pyruvate is formed at the N-terminus of the alpha chain, which is derived from the carboxyl end of the proenzyme. The post-translation cleavage follows an unusual pathway, termed non-hydrolytic serinolysis, in which the side chain hydroxyl group of the serine supplies its oxygen atom to form the C-terminus of the beta chain, while the remainder of the serine residue undergoes an oxidative deamination to produce ammonia and the pyruvoyl prosthetic group on the alpha chain.

The protein localises to the cell membrane. It catalyses the reaction a 1,2-diacyl-sn-glycero-3-phospho-L-serine + H(+) = a 1,2-diacyl-sn-glycero-3-phosphoethanolamine + CO2. It participates in phospholipid metabolism; phosphatidylethanolamine biosynthesis; phosphatidylethanolamine from CDP-diacylglycerol: step 2/2. In terms of biological role, catalyzes the formation of phosphatidylethanolamine (PtdEtn) from phosphatidylserine (PtdSer). The protein is Phosphatidylserine decarboxylase proenzyme of Neisseria gonorrhoeae (strain NCCP11945).